We begin with the raw amino-acid sequence, 362 residues long: Flotillin-like protein FloA 2 (362 aa).

Residues 24-44 (TALLIGALVIFAGIVVVLFIF) form a helical membrane-spanning segment.

Belongs to the flotillin-like FloA family. Homooligomerizes.

The protein resides in the cell membrane. The protein localises to the membrane raft. Functionally, found in functional membrane microdomains (FMM) that may be equivalent to eukaryotic membrane rafts. FMMs are highly dynamic and increase in number as cells age. Flotillins are thought to be important factors in membrane fluidity. This chain is Flotillin-like protein FloA 2, found in Rhodopirellula baltica (strain DSM 10527 / NCIMB 13988 / SH1).